The sequence spans 161 residues: Spermidine N(1)-acetyltransferase (161 aa).

One can recognise an N-acetyltransferase domain in the interval 3 to 160 (IEIRKLSIED…SDFIMEKKYE (158 aa)). Acetyl-CoA contacts are provided by residues 92 to 94 (LYL), 99 to 104 (THKKIG), N131, and S136. Y138 (proton donor) is an active-site residue. K140 serves as a coordination point for acetyl-CoA.

Belongs to the acetyltransferase family. As to quaternary structure, monomer or homodimer.

It carries out the reaction an alkane-alpha,omega-diamine + acetyl-CoA = an N-acetylalkane-alpha,omega-diamine + CoA + H(+). Involved in the protection against polyamine toxicity by regulating their concentration. Could also be involved in the negative control of sporulation as well as production of degradative enzymes such as alpha-amylase, levansucrase and alkaline phosphatase. Catalyzes the transfer of an acetyl group from acetyl coenzyme A (AcCoA) to an acceptor substrate and release both CoA and the acetylated product. It can use a variety of substrates including spermidine, L-tryptophan, L-leucine, L-lysine, dopamine and tyramine. This Thermoplasma acidophilum (strain ATCC 25905 / DSM 1728 / JCM 9062 / NBRC 15155 / AMRC-C165) protein is Spermidine N(1)-acetyltransferase.